We begin with the raw amino-acid sequence, 435 residues long: Cytochrome c biogenesis protein CcsB (435 aa).

The next 3 helical transmembrane spans lie at 11 to 31 (LRVAIFLLLIIALSSSLGTAL), 69 to 89 (SDWFLSLLLWLGIALVFCSWR), and 159 to 179 (VGPLMVHTGLVILMLGAVWGV).

Belongs to the Ccs1/CcsB family. May interact with CcsA.

The protein resides in the plastid. The protein localises to the organellar chromatophore thylakoid membrane. In terms of biological role, required during biogenesis of c-type cytochromes (cytochrome c6 and cytochrome f) at the step of heme attachment. This is Cytochrome c biogenesis protein CcsB from Paulinella chromatophora.